Reading from the N-terminus, the 500-residue chain is Aldehyde dehydrogenase (500 aa).

Gly-246–Gly-251 contacts NAD(+). Glu-269 functions as the Proton acceptor in the catalytic mechanism. Cys-303 serves as the catalytic Nucleophile.

It belongs to the aldehyde dehydrogenase family.

It catalyses the reaction an aldehyde + NAD(+) + H2O = a carboxylate + NADH + 2 H(+). It participates in alcohol metabolism; ethanol degradation; acetate from ethanol: step 2/2. The sequence is that of Aldehyde dehydrogenase (aldA) from Agaricus bisporus (White button mushroom).